The following is a 100-amino-acid chain: Ubiquitin-related modifier 1 homolog (100 aa).

Position 100 is a 1-thioglycine (G100). A Glycyl lysine isopeptide (Gly-Lys) (interchain with K-? in acceptor proteins) cross-link involves residue G100.

It belongs to the URM1 family. In terms of processing, C-terminal thiocarboxylation occurs in 2 steps, it is first acyl-adenylated (-COAMP) via the hesA/moeB/thiF part of the MOCS3 homolog, then thiocarboxylated (-COSH) via the rhodanese domain of the MOCS3 homolog.

The protein localises to the cytoplasm. It participates in tRNA modification; 5-methoxycarbonylmethyl-2-thiouridine-tRNA biosynthesis. Acts as a sulfur carrier required for 2-thiolation of mcm(5)S(2)U at tRNA wobble positions of cytosolic tRNA(Lys), tRNA(Glu) and tRNA(Gln). Serves as sulfur donor in tRNA 2-thiolation reaction by being thiocarboxylated (-COSH) at its C-terminus by MOCS3. The sulfur is then transferred to tRNA to form 2-thiolation of mcm(5)S(2)U. Also acts as a ubiquitin-like protein (UBL) that is covalently conjugated via an isopeptide bond to lysine residues of target proteins. The thiocarboxylated form serves as substrate for conjugation and oxidative stress specifically induces the formation of UBL-protein conjugates. This chain is Ubiquitin-related modifier 1 homolog, found in Caenorhabditis elegans.